A 465-amino-acid polypeptide reads, in one-letter code: Cerebellar degeneration-related protein 2-like (465 aa).

Coiled coils occupy residues 31–64, 91–142, and 188–266; these read AAELGKTLLERNKELEESLQQMYSTNEEQVHEIE, ARDL…LEQL, and LEQE…YLLA. Positions 282 to 315 are disordered; it reads APEADDPQPGSGDDSNAQDGVSSPAASPSHAVRK. 3 positions are modified to phosphoserine: S308, S318, and S344. Positions 350–377 form a coiled coil; the sequence is MSILREVDEQYHALLEKYEELLSKCRQH. Residues 382–421 are disordered; sequence RHAGVQTSRPISRDSSWRDLLGGEESPGEGKAGEKSLSQH. Position 407 is a phosphoserine (S407).

It belongs to the CDR2 family.

In Mus musculus (Mouse), this protein is Cerebellar degeneration-related protein 2-like (Cdr2l).